Reading from the N-terminus, the 79-residue chain is MAMKLRLTRMGCKKRPFYRIVAMNSETRRDGRALEYLGYYNPMVDPAEIKVDGDKVRAWLARGAEPTDTVRALLQKAGV.

The protein belongs to the bacterial ribosomal protein bS16 family.

The polypeptide is Small ribosomal subunit protein bS16 (Solidesulfovibrio magneticus (strain ATCC 700980 / DSM 13731 / RS-1) (Desulfovibrio magneticus)).